We begin with the raw amino-acid sequence, 333 residues long: Type II restriction enzyme XcyI (333 aa).

Belongs to the XcyI type II restriction endonuclease family. Monomer. It depends on Mg(2+) as a cofactor.

The catalysed reaction is Endonucleolytic cleavage of DNA to give specific double-stranded fragments with terminal 5'-phosphates.. Its function is as follows. A P subtype restriction enzyme that recognizes the double-stranded sequence 5'-CCCGGG-3' and cleaves after C-1. This is Type II restriction enzyme XcyI (xcyIR) from Xanthomonas campestris pv. cyanopsidis.